Here is a 259-residue protein sequence, read N- to C-terminus: Dihydroorotate dehydrogenase B (NAD(+)), electron transfer subunit (259 aa).

The region spanning 1-101 is the FAD-binding FR-type domain; it reads MKIEDCTVEE…MGPLGRGYDV (101 aa). FAD is bound by residues 52 to 55, 69 to 71, and 76 to 77; these read RPIS, IYR, and GT. C223, C228, C231, and C245 together coordinate [2Fe-2S] cluster.

The protein belongs to the PyrK family. In terms of assembly, heterotetramer of 2 PyrK and 2 PyrD type B subunits. [2Fe-2S] cluster serves as cofactor. The cofactor is FAD.

Its pathway is pyrimidine metabolism; UMP biosynthesis via de novo pathway; orotate from (S)-dihydroorotate (NAD(+) route): step 1/1. Its function is as follows. Responsible for channeling the electrons from the oxidation of dihydroorotate from the FMN redox center in the PyrD type B subunit to the ultimate electron acceptor NAD(+). The sequence is that of Dihydroorotate dehydrogenase B (NAD(+)), electron transfer subunit from Fusobacterium nucleatum subsp. nucleatum (strain ATCC 25586 / DSM 15643 / BCRC 10681 / CIP 101130 / JCM 8532 / KCTC 2640 / LMG 13131 / VPI 4355).